Reading from the N-terminus, the 856-residue chain is DNA mismatch repair protein MutS (856 aa).

An ATP-binding site is contributed by 609 to 616; that stretch reads GPNMSGKS.

Belongs to the DNA mismatch repair MutS family.

Its function is as follows. This protein is involved in the repair of mismatches in DNA. It is possible that it carries out the mismatch recognition step. This protein has a weak ATPase activity. This is DNA mismatch repair protein MutS from Finegoldia magna (strain ATCC 29328 / DSM 20472 / WAL 2508) (Peptostreptococcus magnus).